Reading from the N-terminus, the 65-residue chain is Large ribosomal subunit protein uL30 (65 aa).

It belongs to the universal ribosomal protein uL30 family. Part of the 50S ribosomal subunit.

The polypeptide is Large ribosomal subunit protein uL30 (Chloroflexus aurantiacus (strain ATCC 29366 / DSM 635 / J-10-fl)).